The sequence spans 862 residues: uncharacterized protein (862 aa).

Disordered stretches follow at residues 45 to 91 (HPPV…PDEV), 633 to 824 (RAEQ…GDDD), and 837 to 862 (GGSGFLTSTAGRNRKSNKQSKTLLLS). Composition is skewed to acidic residues over residues 57–69 (MDVDAESEDEKDE) and 78–91 (PEVESEADEDPDEV). 3 stretches are compositionally biased toward basic and acidic residues: residues 633–650 (RAEQKASKESAKGEDAAK), 657–686 (REAEAGTETPKKKQKEEKSEKPKKTGKAEK), and 694–703 (TKKEKTEKKT). A compositionally biased stretch (basic residues) spans 751–760 (EKKKRTAAKK). Residues 761–779 (KTVDRPSGHRPSSKKEYRS) show a composition bias toward basic and acidic residues.

This is an uncharacterized protein from Ictaluridae (bullhead catfishes).